Here is a 187-residue protein sequence, read N- to C-terminus: Putative lipoprotein LppJ (187 aa).

The first 28 residues, 1–28 (MPHSTADRRLRLTRQALLAAAVAPLLAG), serve as a signal peptide directing secretion. C29 carries the N-palmitoyl cysteine lipid modification. Residue C29 is the site of S-diacylglycerol cysteine attachment.

The protein resides in the cell membrane. The protein is Putative lipoprotein LppJ (lppJ) of Mycobacterium bovis (strain ATCC BAA-935 / AF2122/97).